The sequence spans 471 residues: MTDLPDSTRWQLWIVAFGFFMQSLDTTIVNTALPSMAQSLGESPLHMHMVIVSYVLTVAVMLPASGWLADKVGVRNIFFTAIVLFTLGSLFCALSGTLNELLLARALQGVGGAMMVPVGRLTVMKIVPREQYMAAMTFVTLPGQVGPLLGPALGGLLVEYASWHWIFLINIPVGIIGAIATLLLMPNYTMQTWRFDLSGFLLLAVGMAVLTLALDGSKGTGLSPLAIAGLVAVGVVALVLYLLHARNNNRALFSLKLFRTRTFSLGLAGSFAGRIGSGMLPFMTPVFLQIGLGFSPFHAGLMMIPMVLGSMGMKRIVVQVVNRFGYRRVLVATTLGLSLVTLLFMTTALLGWYYVLPFVLFLQGMVNSTRFSSMNTLTLKDLPDNLASSGNSLLSMIMQLSMSIGVTIAGLLLGLFGSQHVSVDSGTTQTVFMYTWLSMALIIALPAFIFARVPNDTHQNVAISRRKRSAQ.

Topologically, residues 1–11 (MTDLPDSTRWQ) are periplasmic. Residues 12-32 (LWIVAFGFFMQSLDTTIVNTA) traverse the membrane as a helical segment. Over 33-48 (LPSMAQSLGESPLHMH) the chain is Cytoplasmic. The chain crosses the membrane as a helical span at residues 49 to 69 (MVIVSYVLTVAVMLPASGWLA). Over 70–76 (DKVGVRN) the chain is Periplasmic. Residues 77 to 97 (IFFTAIVLFTLGSLFCALSGT) traverse the membrane as a helical segment. Residues 98-101 (LNEL) lie on the Cytoplasmic side of the membrane. Residues 102-124 (LLARALQGVGGAMMVPVGRLTVM) traverse the membrane as a helical segment. Over 125-137 (KIVPREQYMAAMT) the chain is Periplasmic. Residues 138-158 (FVTLPGQVGPLLGPALGGLLV) form a helical membrane-spanning segment. Residues 159-164 (EYASWH) are Cytoplasmic-facing. A helical membrane pass occupies residues 165 to 185 (WIFLINIPVGIIGAIATLLLM). Over 186–196 (PNYTMQTWRFD) the chain is Periplasmic. Residues 197-217 (LSGFLLLAVGMAVLTLALDGS) traverse the membrane as a helical segment. Residues 218 to 224 (KGTGLSP) lie on the Cytoplasmic side of the membrane. Residues 225–245 (LAIAGLVAVGVVALVLYLLHA) form a helical membrane-spanning segment. Over 246-262 (RNNNRALFSLKLFRTRT) the chain is Periplasmic. The chain crosses the membrane as a helical span at residues 263–283 (FSLGLAGSFAGRIGSGMLPFM). Topologically, residues 284–285 (TP) are cytoplasmic. The helical transmembrane segment at 286-306 (VFLQIGLGFSPFHAGLMMIPM) threads the bilayer. Residues 307-341 (VLGSMGMKRIVVQVVNRFGYRRVLVATTLGLSLVT) are Periplasmic-facing. Residues 342–362 (LLFMTTALLGWYYVLPFVLFL) traverse the membrane as a helical segment. The Cytoplasmic segment spans residues 363–395 (QGMVNSTRFSSMNTLTLKDLPDNLASSGNSLLS). The chain crosses the membrane as a helical span at residues 396–416 (MIMQLSMSIGVTIAGLLLGLF). Topologically, residues 417–430 (GSQHVSVDSGTTQT) are periplasmic. Residues 431–451 (VFMYTWLSMALIIALPAFIFA) traverse the membrane as a helical segment. At 452 to 471 (RVPNDTHQNVAISRRKRSAQ) the chain is on the cytoplasmic side.

This sequence belongs to the major facilitator superfamily. TCR/Tet family.

It is found in the cell inner membrane. The protein is Putative multidrug resistance protein MdtD of Shigella boydii serotype 4 (strain Sb227).